The following is a 250-amino-acid chain: Probable transcriptional regulatory protein RC1_1808 (250 aa).

Positions 1 to 21 (MAGHSQFKNIMHRKGAQDAKR) are disordered.

The protein belongs to the TACO1 family.

It is found in the cytoplasm. This Rhodospirillum centenum (strain ATCC 51521 / SW) protein is Probable transcriptional regulatory protein RC1_1808.